A 455-amino-acid chain; its full sequence is Ribosomal protein uS12 methylthiotransferase RimO (455 aa).

Residues 10 to 126 enclose the MTTase N-terminal domain; it reads RKVSMISLGC…ILELIEAHDR (117 aa). Residues Cys-19, Cys-55, Cys-89, Cys-164, Cys-168, and Cys-171 each contribute to the [4Fe-4S] cluster site. The 231-residue stretch at 150–380 folds into the Radical SAM core domain; that stretch reads SSPFYSTYVK…MKAQQRVSFR (231 aa). A TRAM domain is found at 383–451; sequence RALIGRVEPV…EYDLIGEIVD (69 aa).

The protein belongs to the methylthiotransferase family. RimO subfamily. [4Fe-4S] cluster is required as a cofactor.

The protein resides in the cytoplasm. It catalyses the reaction L-aspartate(89)-[ribosomal protein uS12]-hydrogen + (sulfur carrier)-SH + AH2 + 2 S-adenosyl-L-methionine = 3-methylsulfanyl-L-aspartate(89)-[ribosomal protein uS12]-hydrogen + (sulfur carrier)-H + 5'-deoxyadenosine + L-methionine + A + S-adenosyl-L-homocysteine + 2 H(+). Functionally, catalyzes the methylthiolation of an aspartic acid residue of ribosomal protein uS12. In Syntrophotalea carbinolica (strain DSM 2380 / NBRC 103641 / GraBd1) (Pelobacter carbinolicus), this protein is Ribosomal protein uS12 methylthiotransferase RimO.